The sequence spans 93 residues: Guanine nucleotide-binding protein subunit gamma 1 (93 aa).

Residues 12-52 (TRGRHRIQAELKKLEQEARFLEEELEELDKTDKVSAALQEL) are a coiled coil. In terms of domain architecture, G protein gamma spans 20 to 93 (AELKKLEQEA…DLRRCKCWFL (74 aa)). A lipid anchor (S-palmitoyl cysteine) is attached at cysteine 88. A Cysteine methyl ester modification is found at cysteine 90. Cysteine 90 carries the S-farnesyl cysteine lipid modification. Positions 91–93 (WFL) are cleaved as a propeptide — removed in mature form.

As to quaternary structure, g proteins are composed of 3 units, alpha, beta and gamma. Interacts with the beta subunit RGB1.

Its subcellular location is the cell membrane. Functionally, guanine nucleotide-binding proteins (G proteins) are involved as modulators or transducers in various transmembrane signaling systems. This chain is Guanine nucleotide-binding protein subunit gamma 1, found in Oryza sativa subsp. indica (Rice).